The sequence spans 122 residues: Large ribosomal subunit protein uL14 (122 aa).

It belongs to the universal ribosomal protein uL14 family. In terms of assembly, part of the 50S ribosomal subunit. Forms a cluster with proteins L3 and L19. In the 70S ribosome, L14 and L19 interact and together make contacts with the 16S rRNA in bridges B5 and B8.

In terms of biological role, binds to 23S rRNA. Forms part of two intersubunit bridges in the 70S ribosome. The protein is Large ribosomal subunit protein uL14 of Rickettsia felis (strain ATCC VR-1525 / URRWXCal2) (Rickettsia azadi).